A 316-amino-acid chain; its full sequence is Peroxidase 67 (316 aa).

Positions 1–19 are cleaved as a signal peptide; it reads MLKVVLLMMIMMLASQSEA. A Pyrrolidone carboxylic acid modification is found at Gln-20. Cystine bridges form between Cys-30–Cys-110, Cys-63–Cys-68, Cys-116–Cys-312, and Cys-196–Cys-221. Residue His-61 is the Proton acceptor of the active site. The Ca(2+) site is built by Asp-62, Val-65, Gly-67, Asp-69, and Ser-71. Residue Pro-159 participates in substrate binding. His-189 is a heme b binding site. Thr-190 contacts Ca(2+). Asn-205 carries an N-linked (GlcNAc...) asparagine glycan. Ca(2+)-binding residues include Asp-236, Ser-239, and Asp-244.

The protein belongs to the peroxidase family. Classical plant (class III) peroxidase subfamily. It depends on heme b as a cofactor. Ca(2+) is required as a cofactor.

It localises to the secreted. It catalyses the reaction 2 a phenolic donor + H2O2 = 2 a phenolic radical donor + 2 H2O. Removal of H(2)O(2), oxidation of toxic reductants, biosynthesis and degradation of lignin, suberization, auxin catabolism, response to environmental stresses such as wounding, pathogen attack and oxidative stress. These functions might be dependent on each isozyme/isoform in each plant tissue. The protein is Peroxidase 67 (PER67) of Arabidopsis thaliana (Mouse-ear cress).